A 649-amino-acid polypeptide reads, in one-letter code: Transcription factor tau 95 kDa subunit (649 aa).

The interval 1-21 (MPVEEPLATLSSIPDSSADQA) is disordered. The segment covering 9-19 (TLSSIPDSSAD) has biased composition (polar residues). Repeat unit 1 spans residues 221–239 (PSTDFQLPPPPKLSMVGFP). The 2 X repeats, Pro-rich stretch occupies residues 221–419 (PSTDFQLPPP…PPLVFESDTP (199 aa)). The short motif at 296–300 (AKKTK) is the Nuclear localization signal element. The stretch at 400–419 (PIVKKNVPKPPPLVFESDTP) is repeat 2. The disordered stretch occupies residues 556–612 (IAAGDDFDDNGAITEEPDDAALENEEMDTDQNLKVPASIDDDVDDVDADEEEQESFD). 2 stretches are compositionally biased toward acidic residues: residues 560–584 (DDFDDNGAITEEPDDAALENEEMDT) and 594–610 (IDDDVDDVDADEEEQES). At Ser617 the chain carries Phosphoserine.

The protein belongs to the TFIIIC subunit 5 family. Component of the TFIIIC complex composed of TFC1, TFC3, TFC4, TFC6, TFC7 and TFC8. The subunits are organized in two globular domains, tauA and tauB, connected by a proteolysis-sensitive and flexible linker. Interacts with TFC3, TFC4 and TFC6.

The protein resides in the nucleus. In terms of biological role, TFIIIC mediates tRNA and 5S RNA gene activation by binding to intragenic promoter elements. Upstream of the transcription start site, TFIIIC assembles the initiation complex TFIIIB-TFIIIC-tDNA, which is sufficient for RNA polymerase III recruitment and function. Part of the tauA domain of TFIIIC that binds boxA DNA promoter sites of tRNA and similar genes. Participates in the interconnection of tauA with tauB via its contacts with TFC3 and TFC6. Serves as a scaffold critical for tauA-DNA spatial configuration and tauB-DNA stability. The sequence is that of Transcription factor tau 95 kDa subunit (TFC1) from Saccharomyces cerevisiae (strain ATCC 204508 / S288c) (Baker's yeast).